A 427-amino-acid chain; its full sequence is Rhodocoxin reductase (427 aa).

2 to 34 (SIVIIGSGQAGFEAAVSLRSHGFSGTITLVGDE) is an FAD binding site. Residue 144-172 (SLVVIGAGFIGLEVAAAARKKGLDVTVVE) participates in NAD(+) binding.

This sequence belongs to the FAD-dependent oxidoreductase family. FAD is required as a cofactor.

The degradation of the thiocarbamate herbicide EPTC by cytochrome CYP116 (thcB) requires the participation of a flavoprotein, rhodocoxin reductase, and an iron-sulfur protein, rhodocoxin, to mediate the transfer of electrons from NADH to P450 for oxygen activation. This Rhodococcus erythropolis (Arthrobacter picolinophilus) protein is Rhodocoxin reductase (thcD).